We begin with the raw amino-acid sequence, 227 residues long: Cytochrome c oxidase subunit 2 (227 aa).

Residues 1-14 (MAHRAQVGLQDATS) lie on the Mitochondrial intermembrane side of the membrane. Residues 15 to 45 (PIMEELVIFHDHALMIIFLICFLVLYALFLT) form a helical membrane-spanning segment. Over 46–59 (LTTKLTNTNISDAQ) the chain is Mitochondrial matrix. A helical membrane pass occupies residues 60 to 87 (EMETIWTTLPAIILILIALPSLRILYLT). At 88–227 (DEINDPSFTI…IFEMGPVFAL (140 aa)) the chain is on the mitochondrial intermembrane side. Cu cation contacts are provided by H161, C196, E198, C200, H204, and M207. A Mg(2+)-binding site is contributed by E198.

This sequence belongs to the cytochrome c oxidase subunit 2 family. As to quaternary structure, component of the cytochrome c oxidase (complex IV, CIV), a multisubunit enzyme composed of 14 subunits. The complex is composed of a catalytic core of 3 subunits MT-CO1, MT-CO2 and MT-CO3, encoded in the mitochondrial DNA, and 11 supernumerary subunits COX4I, COX5A, COX5B, COX6A, COX6B, COX6C, COX7A, COX7B, COX7C, COX8 and NDUFA4, which are encoded in the nuclear genome. The complex exists as a monomer or a dimer and forms supercomplexes (SCs) in the inner mitochondrial membrane with NADH-ubiquinone oxidoreductase (complex I, CI) and ubiquinol-cytochrome c oxidoreductase (cytochrome b-c1 complex, complex III, CIII), resulting in different assemblies (supercomplex SCI(1)III(2)IV(1) and megacomplex MCI(2)III(2)IV(2)). Found in a complex with TMEM177, COA6, COX18, COX20, SCO1 and SCO2. Interacts with TMEM177 in a COX20-dependent manner. Interacts with COX20. Interacts with COX16. The cofactor is Cu cation.

It localises to the mitochondrion inner membrane. It carries out the reaction 4 Fe(II)-[cytochrome c] + O2 + 8 H(+)(in) = 4 Fe(III)-[cytochrome c] + 2 H2O + 4 H(+)(out). Component of the cytochrome c oxidase, the last enzyme in the mitochondrial electron transport chain which drives oxidative phosphorylation. The respiratory chain contains 3 multisubunit complexes succinate dehydrogenase (complex II, CII), ubiquinol-cytochrome c oxidoreductase (cytochrome b-c1 complex, complex III, CIII) and cytochrome c oxidase (complex IV, CIV), that cooperate to transfer electrons derived from NADH and succinate to molecular oxygen, creating an electrochemical gradient over the inner membrane that drives transmembrane transport and the ATP synthase. Cytochrome c oxidase is the component of the respiratory chain that catalyzes the reduction of oxygen to water. Electrons originating from reduced cytochrome c in the intermembrane space (IMS) are transferred via the dinuclear copper A center (CU(A)) of subunit 2 and heme A of subunit 1 to the active site in subunit 1, a binuclear center (BNC) formed by heme A3 and copper B (CU(B)). The BNC reduces molecular oxygen to 2 water molecules using 4 electrons from cytochrome c in the IMS and 4 protons from the mitochondrial matrix. This Pongo pygmaeus (Bornean orangutan) protein is Cytochrome c oxidase subunit 2 (MT-CO2).